We begin with the raw amino-acid sequence, 120 residues long: Large ribosomal subunit protein uL18 (120 aa).

It belongs to the universal ribosomal protein uL18 family. As to quaternary structure, part of the 50S ribosomal subunit; part of the 5S rRNA/L5/L18/L25 subcomplex. Contacts the 5S and 23S rRNAs.

Functionally, this is one of the proteins that bind and probably mediate the attachment of the 5S RNA into the large ribosomal subunit, where it forms part of the central protuberance. The chain is Large ribosomal subunit protein uL18 from Staphylococcus carnosus (strain TM300).